An 83-amino-acid polypeptide reads, in one-letter code: Conotoxin LiCr95 (83 aa).

Residues 1-22 (MKLTCALIVAMLFLTACQLTTT) form the signal peptide. Positions 23 to 50 (DDSRGRQKYPTERLRVKMRNPKLSKLTK) are excised as a propeptide. Cystine bridges form between C52/C67, C59/C71, and C66/C80.

This sequence belongs to the conotoxin O1 superfamily. Expressed by the venom duct.

The protein localises to the secreted. This chain is Conotoxin LiCr95, found in Conus lividus (Livid cone).